Reading from the N-terminus, the 274-residue chain is Protein STAY-GREEN, chloroplastic (274 aa).

Residues 1 to 48 constitute a chloroplast transit peptide; the sequence is MAAATSTMSLLPPITQQQRWHAADSLVVLASRCHNSRRRRRCRYVVPR.

This sequence belongs to the staygreen family. As to quaternary structure, interacts with LHCII complex. Expressed in leaves, roots and developing seeds.

The protein localises to the plastid. It is found in the chloroplast membrane. The protein resides in the chloroplast stroma. Involved in the disassembling mechanism of the intact light-harvesting complex of photosystem II (LHCII) in the thylakoid membranes. Required to trigger chlorophyll degradation during natural and dark-induced leaf senescence. The protein is Protein STAY-GREEN, chloroplastic (SGR) of Oryza sativa subsp. japonica (Rice).